Reading from the N-terminus, the 298-residue chain is Protein BZR1 homolog 1 (298 aa).

Disordered regions lie at residues 1–25 (MTSG…RRER), 71–129 (GTTY…SPSR), 153–175 (VSSS…PKIR), and 190–217 (AVSA…ESDV). The tract at residues 10–91 (RTPTWKEREN…PSSAGGASVG (82 aa)) is required for DNA-binding. Positions 96–128 (SSTQLLSAPSSSFPSPVPSYHASPASSSFPSPS) are enriched in low complexity. Position 156 is a phosphoserine (serine 156). Positions 204–224 (EHPDTIPECDESDVSTVDSGR) are PEST-like.

The protein belongs to the BZR/LAT61 family. As to quaternary structure, interacts with GF14C. Interacts with PUB24. Interacts with SMOS1. In terms of processing, phosphorylated on serine and threonine residues by GSK2. Dephosphorylated during response to brassinosteroid. Ubiquitinated by PUB24. Ubiquitination leads to its subsequent degradation by the 26S proteasome, thus reducing sensitivity to brassinosteroid signaling.

It localises to the nucleus. The protein localises to the cytoplasm. Its function is as follows. Positive brassinosteroid-signaling protein. Mediates downstream brassinosteroid-regulated growth response and feedback inhibition of brassinosteroid (BR) biosynthetic genes. May act as transcriptional repressor by binding the brassinosteroid-response element (BREE) (5'-CGTG(T/C)G-3') in the promoter of DLT (AC Q9LWU9), another positive regulator of BR signaling. Acts as a transcriptional repressor of LIC, a negative regulator of BR signaling, by binding to the BRRE element of its promoter. BZR1 and LIC play opposite roles in BR signaling and regulation of leaf bending. The polypeptide is Protein BZR1 homolog 1 (Oryza sativa subsp. japonica (Rice)).